We begin with the raw amino-acid sequence, 148 residues long: Single-stranded DNA-binding protein, mitochondrial (148 aa).

The transit peptide at 1 to 16 (MFRRPALQVLRQFVRH) directs the protein to the mitochondrion. The region spanning 30–141 (LNRVQLLGRV…IIADNIVFLS (112 aa)) is the SSB domain. Residues S67 and S79 each carry the phosphoserine modification. K113 bears the N6-acetyllysine mark. K122 carries the N6-succinyllysine modification.

In terms of assembly, homotetramer. Interacts with MPG/AAG, through inhibition of its glycosylase activity it potentially prevents formation of DNA breaks in ssDNA, ensuring that base removal primarily occurs in dsDNA. Interacts with POLDIP2. Interacts with PRIMPOL.

The protein resides in the mitochondrion. Its subcellular location is the mitochondrion matrix. It is found in the mitochondrion nucleoid. Functionally, binds preferentially and cooperatively to pyrimidine rich single-stranded DNA (ss-DNA). In vitro, required to maintain the copy number of mitochondrial DNA (mtDNA) and plays a crucial role during mtDNA replication by stimulating the activity of the replisome components POLG and TWNK at the replication fork. Promotes the activity of the gamma complex polymerase POLG, largely by organizing the template DNA and eliminating secondary structures to favor ss-DNA conformations that facilitate POLG activity. In addition it is able to promote the 5'-3' unwinding activity of the mtDNA helicase TWNK. May also function in mtDNA repair. The protein is Single-stranded DNA-binding protein, mitochondrial (SSBP1) of Oryctolagus cuniculus (Rabbit).